A 642-amino-acid polypeptide reads, in one-letter code: MNDITVTLPDGSELSVPADATVEDVAYEIGPGLGRDTIAGVVDGELVDATTSVYNDARVVIVTEQSDEYQRVLRHSAAHVFAQALQREYPDAKLTIGPPTDDGFYYDIASVDLDENDLETIETEMEAIIDADIPITQQYQSREEAFSKYENNPYKCDILETEAADEDPVSFYIQDDFEDLCQGPHVDSTGEIGAITLLNISSAYWRGDEDNDTLTRVYGAAFESESELESFLERRKKAKERDHRKIGQELDLFSIPDITGPGLPLYHPDGKKILNELSSFARSLNLEAGYEPVETPHLFRTELWKQSGHYENYVDDMFLLDVSDEEYGLKPMNCPGHATIFDQHSWSYRDLPVRYFEDGKVYRKEQRGELSGLSRVWSFTIDDGHLFCQPEQIEQEVTHVMDAIYSVLDTFGLEAHVALATRPEKSVGGDEIWENAETQLRSVLESQNIDYDLEPGDGAFYGPKIDFAFEDALGRQWDGPTVQLDFNMPDRFELTYTGEDNTDHQPVMIHRALYGSYERFFMVLIEHFNGKFPLWLAPDQVRILPISDDQLGYAHRIKNELSDFRVSIEDRAWTLGRKIRAAQEERVPYMIIIGDDEVSTETISVRDRKEREKQDVDLSTFHSHLKSEYENKRLEPDFIDMN.

The TGS domain maps to 1 to 63; that stretch reads MNDITVTLPD…YNDARVVIVT (63 aa). The tract at residues 242–533 is catalytic; sequence DHRKIGQELD…LIEHFNGKFP (292 aa). Zn(2+) contacts are provided by C334, H385, and H510.

Belongs to the class-II aminoacyl-tRNA synthetase family. Homodimer. Zn(2+) serves as cofactor.

The protein resides in the cytoplasm. It catalyses the reaction tRNA(Thr) + L-threonine + ATP = L-threonyl-tRNA(Thr) + AMP + diphosphate + H(+). In terms of biological role, catalyzes the attachment of threonine to tRNA(Thr) in a two-step reaction: L-threonine is first activated by ATP to form Thr-AMP and then transferred to the acceptor end of tRNA(Thr). The chain is Threonine--tRNA ligase from Haloquadratum walsbyi (strain DSM 16790 / HBSQ001).